A 209-amino-acid polypeptide reads, in one-letter code: Uracil phosphoribosyltransferase (209 aa).

Residues arginine 79, arginine 104, and 131–139 (DPMLATGGS) contribute to the 5-phospho-alpha-D-ribose 1-diphosphate site. Uracil-binding positions include isoleucine 194 and 199–201 (GDA). Aspartate 200 provides a ligand contact to 5-phospho-alpha-D-ribose 1-diphosphate.

This sequence belongs to the UPRTase family. Mg(2+) serves as cofactor.

It catalyses the reaction UMP + diphosphate = 5-phospho-alpha-D-ribose 1-diphosphate + uracil. Its pathway is pyrimidine metabolism; UMP biosynthesis via salvage pathway; UMP from uracil: step 1/1. Its activity is regulated as follows. Allosterically activated by GTP. Functionally, catalyzes the conversion of uracil and 5-phospho-alpha-D-ribose 1-diphosphate (PRPP) to UMP and diphosphate. The protein is Uracil phosphoribosyltransferase of Clostridium novyi (strain NT).